We begin with the raw amino-acid sequence, 190 residues long: Transcription termination/antitermination protein NusG (190 aa).

Residues 141 to 165 enclose the KOW domain; that stretch reads GDMVRVTSGPFADFSGVVSEVNAPQ.

This sequence belongs to the NusG family.

Functionally, participates in transcription elongation, termination and antitermination. In Deinococcus radiodurans (strain ATCC 13939 / DSM 20539 / JCM 16871 / CCUG 27074 / LMG 4051 / NBRC 15346 / NCIMB 9279 / VKM B-1422 / R1), this protein is Transcription termination/antitermination protein NusG.